A 398-amino-acid chain; its full sequence is Succinate--CoA ligase [ADP-forming] subunit beta (398 aa).

The region spanning Lys9–Glu254 is the ATP-grasp domain. ATP contacts are provided by residues Lys46, Gly53–Gly55, Glu109, Ser112, and Glu117. Mg(2+)-binding residues include Asn209 and Asp223. Substrate is bound by residues Asn274 and Gly331 to Met333.

The protein belongs to the succinate/malate CoA ligase beta subunit family. Heterotetramer of two alpha and two beta subunits. Requires Mg(2+) as cofactor.

It catalyses the reaction succinate + ATP + CoA = succinyl-CoA + ADP + phosphate. The enzyme catalyses GTP + succinate + CoA = succinyl-CoA + GDP + phosphate. It participates in carbohydrate metabolism; tricarboxylic acid cycle; succinate from succinyl-CoA (ligase route): step 1/1. Succinyl-CoA synthetase functions in the citric acid cycle (TCA), coupling the hydrolysis of succinyl-CoA to the synthesis of either ATP or GTP and thus represents the only step of substrate-level phosphorylation in the TCA. The beta subunit provides nucleotide specificity of the enzyme and binds the substrate succinate, while the binding sites for coenzyme A and phosphate are found in the alpha subunit. The sequence is that of Succinate--CoA ligase [ADP-forming] subunit beta from Rhodopseudomonas palustris (strain ATCC BAA-98 / CGA009).